A 308-amino-acid chain; its full sequence is MPLSPDPYSALRHAAKYVQQFRRKTFVVKLGGAMLSDPRLRRAACEQIALLWTFSIRPVVVHGGGPELDTLCDALHLPVEKVAGRRVTSAPVLDAAKMVLAGKLHTDLLADLQAAGVPAVGLSGVDAGLIKARKRPPVMVTEAGATEGKLVDYGLVGDIEQVDTRVVEHLRSADYVPVIAPLSGGTDGAVYNTNADTVAAALAVALSAEKLFFLVQVPGLLKNVSDPSSLVTLANLTDLATMESTGAIAGGMKPKAHAIRHALVGGVGSVHLVSGVQPNALLEEVFTNEGSGTMVVRENAQKPAGAVG.

Substrate-binding positions include 64 to 65 (GG), R86, and N192.

This sequence belongs to the acetylglutamate kinase family. ArgB subfamily.

Its subcellular location is the cytoplasm. It catalyses the reaction N-acetyl-L-glutamate + ATP = N-acetyl-L-glutamyl 5-phosphate + ADP. It functions in the pathway amino-acid biosynthesis; L-arginine biosynthesis; N(2)-acetyl-L-ornithine from L-glutamate: step 2/4. In terms of biological role, catalyzes the ATP-dependent phosphorylation of N-acetyl-L-glutamate. The sequence is that of Acetylglutamate kinase from Myxococcus xanthus (strain DK1622).